The following is a 1679-amino-acid chain: Lysophospholipase NTE1 (1679 aa).

The span at 1–20 (MRSMNCTTNNTNNTGQNTKN) shows a compositional bias: low complexity. A disordered region spans residues 1-21 (MRSMNCTTNNTNNTGQNTKNS). The Cytoplasmic segment spans residues 1-49 (MRSMNCTTNNTNNTGQNTKNSLGSSFNSSNYTSYRFQTCLTDQIISEAQ). Residues 50–70 (TWSLSSLFNFSWVVSYFVMGA) traverse the membrane as a helical segment. Over 71-103 (SRMIFRYGWYLATLSLLRIPKWIFFKLHHVQFT) the chain is Lumenal. A helical membrane pass occupies residues 104–124 (LSFWLILFALAVIVFVTYTIM). Topologically, residues 125-1679 (KERILSQYKR…EFLLHRRNSI (1555 aa)) are cytoplasmic. The span at 261–274 (SDKDHGDETDHSDT) shows a compositional bias: basic and acidic residues. Residues 261 to 304 (SDKDHGDETDHSDTDGLDDQDRDEEDEEEDDDIDNYDTKSCSSN) form a disordered region. Acidic residues predominate over residues 275–295 (DGLDDQDRDEEDEEEDDDIDN). A phosphoserine mark is found at Ser-300 and Ser-312. Disordered regions lie at residues 498 to 527 (SSGSADLEPKPKNSNASSKLKKPPKAKPSD) and 586 to 672 (DILS…VSPR). Composition is skewed to polar residues over residues 592 to 606 (PIHNNNRNKSNGINT) and 630 to 652 (FSSLSPELRNAQLSTSPLSLDNT). Ser-632, Ser-634, Ser-653, Ser-661, Ser-670, Ser-680, and Ser-739 each carry phosphoserine. Residues 775-800 (KEYTISNKRHNKSKSQDKKKPRAYKE) are disordered. A compositionally biased stretch (basic and acidic residues) spans 788–800 (KSQDKKKPRAYKE). Thr-803 carries the phosphothreonine modification. A nucleoside 3',5'-cyclic phosphate is bound by residues 803 to 947 (TPNL…LTKL) and 943 to 1074 (SLTK…VAKK). A disordered region spans residues 855–882 (SSSVVSSMSKPEQVSAQSSHKGENPHHT). Over residues 862-873 (MSKPEQVSAQSS) the composition is skewed to polar residues. The region spanning 1373–1537 (LVLGGGGARG…VDNLPVTEMR (165 aa)) is the PNPLA domain. The short motif at 1377–1382 (GGGARG) is the GXGXXG element. Positions 1404–1408 (GTSIG) match the GXSXG motif. Ser-1406 (nucleophile) is an active-site residue. Asp-1524 serves as the catalytic Proton acceptor. Positions 1524–1526 (DGG) match the DGA/G motif.

It belongs to the NTE family.

It localises to the endoplasmic reticulum membrane. It is found in the lipid droplet. The catalysed reaction is a 1-acyl-sn-glycero-3-phosphocholine + H2O = sn-glycerol 3-phosphocholine + a fatty acid + H(+). It catalyses the reaction a 1,2-diacyl-sn-glycero-3-phosphocholine + 2 H2O = sn-glycerol 3-phosphocholine + 2 a carboxylate + 2 H(+). With respect to regulation, positively regulated by SEC14. Inhibited by organophosphorus esters in the order phenyl saligenin phosphate (PSP) &gt; phenyldipentyl phosphinate (PDPP) = diisopropyl fluorophosphate (DFP) &gt; and paraoxon (PXN). In terms of biological role, intracellular phospholipase B that catalyzes the double deacylation of phosphatidylcholine (PC) to glycerophosphocholine (GroPCho). Plays an important role in membrane lipid homeostasis. Responsible for the rapid PC turnover in response to inositol, elevated temperatures, or when choline is present in the growth medium. NTE1 activity impacts the repressing transcriptional activity of OPI1, the main regulator of phospholipid synthesis gene transcription. The protein is Lysophospholipase NTE1 (NTE1) of Saccharomyces cerevisiae (strain ATCC 204508 / S288c) (Baker's yeast).